A 200-amino-acid polypeptide reads, in one-letter code: ADP-ribosylation factor-like protein 4D (200 aa).

The N-myristoyl glycine moiety is linked to residue glycine 2. Residues 27-34 (GLDSAGKT), 75-79 (DVGGQ), and 134-137 (NKQD) each bind GTP.

The protein belongs to the small GTPase superfamily. Arf family. As to quaternary structure, interacts with CYTH2; the interaction is direct and ARL4D GTP-dependent. Does not interact with ARL4D.

The protein resides in the nucleus. Its subcellular location is the nucleolus. It is found in the cell membrane. The protein localises to the cytoplasm. In terms of biological role, small GTP-binding protein which cycles between an inactive GDP-bound and an active GTP-bound form, and the rate of cycling is regulated by guanine nucleotide exchange factors (GEF) and GTPase-activating proteins (GAP). GTP-binding protein that does not act as an allosteric activator of the cholera toxin catalytic subunit. Recruits CYTH1, CYTH2, CYTH3 and CYTH4 to the plasma membrane in GDP-bound form. The chain is ADP-ribosylation factor-like protein 4D (ARL4D) from Bos taurus (Bovine).